Here is a 397-residue protein sequence, read N- to C-terminus: Odorant receptor 22a (397 aa).

Topologically, residues 1–49 (MLSKFFPHIKEKPLSERVKSRDAFIYLDRVMWSFGWTEPENKRWILPYK) are cytoplasmic. The helical transmembrane segment at 50 to 70 (LWLAFVNIVMLILLPISISIE) threads the bilayer. At 71-86 (YLHRFKTFSAGEFLSS) the chain is on the extracellular side. A helical transmembrane segment spans residues 87 to 107 (LEIGVNMYGSSFKCAFTLIGF). The Cytoplasmic portion of the chain corresponds to 108–136 (KKRQEAKVLLDQLDKRCLSDKERSTVHRY). Residues 137 to 157 (VAMGNFFDILYHIFYSTFVVM) form a helical membrane-spanning segment. At 158–182 (NFPYFLLERRHAWRMYFPYIDSDEQ) the chain is on the extracellular side. Residues 183 to 203 (FYISSIAECFLMTEAIYMDLC) form a helical membrane-spanning segment. Topologically, residues 204 to 263 (TDVCPLISMLMARCHISLLKQRLRNLRSKPGRTEDEYLEELTECIRDHRLLLDYVDALRP) are cytoplasmic. Residues 264–280 (VFSGTIFVQFLLIGTVL) form a helical membrane-spanning segment. The Extracellular portion of the chain corresponds to 281-286 (GLSMIN). A helical membrane pass occupies residues 287–304 (LMFFSTFWTGVATCLFMF). Over 305–356 (DVSMETFPFCYLCNMIIDDCQEMSNCLFQSDWTSADRRYKSTLVYFLHNLQQ) the chain is Cytoplasmic. Residues 357–377 (PITLTAGGVFPISMQTNLAMV) traverse the membrane as a helical segment. Residues 378–397 (KLAFSVVTVIKQFNLAERFQ) are Extracellular-facing.

The protein belongs to the insect chemoreceptor superfamily. Heteromeric odorant receptor channel (TC 1.A.69) family. Or2a subfamily. In terms of assembly, interacts with Orco, via conserved C-terminal cytoplasmic loops. Complexes exist early in the endomembrane system in olfactory sensory neurons (OSNs), coupling these complexes to the conserved ciliary trafficking pathway. Interacts with snmp1. As to expression, expressed with Orco in 17-20 sensory neurons on the medial-proximal edge of the antenna. Expressed in the ab3A neuron which responds to ethyl butyrate.

It localises to the cell membrane. Odorant receptor which mediates acceptance or avoidance behavior, depending on its substrates. The odorant receptor repertoire encodes a large collection of odor stimuli that vary widely in identity, intensity, and duration. Involved in the behavioral responses ethyl butyrate and to esters in more general. Complexes with Orco to form odorant-sensing units, providing sensitive and prolonged odorant signaling and calcium permeability. They are necessary and sufficient to promote functional reconstitution of odor-evoked signaling in sensory neurons that normally respond only to carbon dioxide. This is Odorant receptor 22a (Or22a) from Drosophila melanogaster (Fruit fly).